Reading from the N-terminus, the 112-residue chain is Large ribosomal subunit protein bL21 (112 aa).

The protein belongs to the bacterial ribosomal protein bL21 family. In terms of assembly, part of the 50S ribosomal subunit. Contacts protein L20.

This protein binds to 23S rRNA in the presence of protein L20. The sequence is that of Large ribosomal subunit protein bL21 from Buchnera aphidicola subsp. Baizongia pistaciae (strain Bp).